A 79-amino-acid chain; its full sequence is MKDLVNRSKRMSRRRLAPIRAGESIDYKNVGLLRRFISEQGKILSRRVNRLTAKQQRNMTKAIKRARILALLPFLNNEN.

It belongs to the bacterial ribosomal protein bS18 family. In terms of assembly, part of the 30S ribosomal subunit.

It localises to the plastid. The protein localises to the chloroplast. This chain is Small ribosomal subunit protein bS18c, found in Chaetosphaeridium globosum (Charophycean green alga).